Consider the following 3933-residue polypeptide: Protein DOP1 homolog PFC0245c (3933 aa).

4 helical membrane-spanning segments follow: residues 70-90 (LNPL…SSIF), 98-118 (FINN…HCTI), 140-160 (IFAY…NNIL), and 163-183 (IYSI…WLLL). 3 disordered regions span residues 468-494 (RLNN…KYQG), 543-600 (ININ…NMLH), and 614-656 (KKIN…SSSS). Residues 470–486 (NNNNNNNNNNNNNNNNN) are compositionally biased toward low complexity. Over residues 546-561 (NDDDNLNYDDNEDDEY) the composition is skewed to acidic residues. Composition is skewed to low complexity over residues 563 to 576 (NYHN…NYFN) and 585 to 597 (ENNN…NNNN). Residues 620 to 651 (GQTNNYDDDEEEEDEEEEDNNNNTSYNNNNNN) are a coiled coil. Positions 625–639 (YDDDEEEEDEEEEDN) are enriched in acidic residues. The span at 640–656 (NNNTSYNNNNNNSSSSS) shows a compositional bias: low complexity. A run of 3 helical transmembrane segments spans residues 782 to 802 (MLNL…YTFY), 842 to 862 (YLYI…MNFL), and 1186 to 1206 (FYFW…KSLL). Residues 1216–1255 (DDTDDDDDDDDDDDDEEEDDDDEDDDDEDDEEEDDEEDLG) are compositionally biased toward acidic residues. Disordered stretches follow at residues 1216–1284 (DDTD…MNKK) and 1361–1405 (TNNN…NNFN). The segment covering 1263–1284 (SSKKGKKKKKKSVHKNKLMNKK) has biased composition (basic residues). Residues 1349–1403 (ELNKMKYMNEDITNNNNNINNNSNNNNNNKNNINNNNNNNNNNNNNNNNLNNLNN) adopt a coiled-coil conformation. Over residues 1362-1405 (NNNNNINNNSNNNNNNKNNINNNNNNNNNNNNNNNNLNNLNNFN) the composition is skewed to low complexity. The next 2 membrane-spanning stretches (helical) occupy residues 1462–1482 (FIKL…MFCL) and 1997–2017 (KNIF…KLIY). The tract at residues 2691-2739 (HRRKMNRQNIRTDSSNNNNNNNINSNNNNNNNNNNNNNNNNNNNNNIYN) is disordered. Residues 2704–2739 (SSNNNNNNNINSNNNNNNNNNNNNNNNNNNNNNIYN) are compositionally biased toward low complexity. 5 consecutive transmembrane segments (helical) span residues 2860-2880 (INLN…CTLT), 2905-2925 (IMSS…HIYV), 3017-3037 (YSEI…YHTV), 3200-3220 (ILIL…YIII), and 3276-3296 (IIIN…SWIF). Positions 3620-3646 (LKNEKSTRTYNSSLQEGSDYDEEEDEE) are disordered. Positions 3637 to 3646 (SDYDEEEDEE) are enriched in acidic residues. Positions 3897-3925 (KEETIILLKELNSVENDINDLFLEVDLNE) form a coiled coil.

This sequence belongs to the DOP1 family.

The protein resides in the membrane. In terms of biological role, may be involved in protein traffic between late Golgi and early endosomes. The protein is Protein DOP1 homolog PFC0245c of Plasmodium falciparum (isolate 3D7).